The chain runs to 233 residues: N-(5'-phosphoribosyl)anthranilate isomerase (233 aa).

This sequence belongs to the TrpF family.

It catalyses the reaction N-(5-phospho-beta-D-ribosyl)anthranilate = 1-(2-carboxyphenylamino)-1-deoxy-D-ribulose 5-phosphate. It functions in the pathway amino-acid biosynthesis; L-tryptophan biosynthesis; L-tryptophan from chorismate: step 3/5. The protein is N-(5'-phosphoribosyl)anthranilate isomerase of Synechococcus sp. (strain JA-2-3B'a(2-13)) (Cyanobacteria bacterium Yellowstone B-Prime).